The following is a 460-amino-acid chain: tRNA modification GTPase MnmE (460 aa).

Residues Arg22, Glu87, and Arg126 each coordinate (6S)-5-formyl-5,6,7,8-tetrahydrofolate. The TrmE-type G domain occupies 222-381 (GLKTAIIGKP…LENTIYNLVF (160 aa)). Asn232 is a binding site for K(+). GTP is bound by residues 232–237 (NVGKSS), 251–257 (TDIPGTT), and 276–279 (DTAG). Residue Ser236 coordinates Mg(2+). K(+)-binding residues include Thr251, Ile253, and Thr256. Thr257 contributes to the Mg(2+) binding site. (6S)-5-formyl-5,6,7,8-tetrahydrofolate is bound at residue Lys460.

Belongs to the TRAFAC class TrmE-Era-EngA-EngB-Septin-like GTPase superfamily. TrmE GTPase family. As to quaternary structure, homodimer. Heterotetramer of two MnmE and two MnmG subunits. The cofactor is K(+).

The protein localises to the cytoplasm. Functionally, exhibits a very high intrinsic GTPase hydrolysis rate. Involved in the addition of a carboxymethylaminomethyl (cmnm) group at the wobble position (U34) of certain tRNAs, forming tRNA-cmnm(5)s(2)U34. In Thermoanaerobacter pseudethanolicus (strain ATCC 33223 / 39E) (Clostridium thermohydrosulfuricum), this protein is tRNA modification GTPase MnmE.